Consider the following 580-residue polypeptide: E3 ubiquitin-protein ligase TRIM45 (580 aa).

The RING-type zinc finger occupies 29 to 98; the sequence is CPTCLRLFKV…QIGILCPVCD (70 aa). 2 consecutive B box-type zinc fingers follow at residues 130–176 and 186–227; these read GQGL…MVDL and GKPI…YDFT. Residues Cys-135, Cys-138, Cys-158, His-162, Cys-191, His-194, Cys-214, and His-219 each contribute to the Zn(2+) site. Residues 249–329 are a coiled coil; that stretch reads VEALEDALAQ…LLADMRTGVE (81 aa). The Filamin repeat unit spans residues 394-497; that stretch reads TQEVDPAQCV…VQGSPFNVTV (104 aa).

The protein belongs to the TRIM/RBCC family.

Its subcellular location is the cytoplasm. It localises to the nucleus. The catalysed reaction is S-ubiquitinyl-[E2 ubiquitin-conjugating enzyme]-L-cysteine + [acceptor protein]-L-lysine = [E2 ubiquitin-conjugating enzyme]-L-cysteine + N(6)-ubiquitinyl-[acceptor protein]-L-lysine.. Its function is as follows. E3 ubiquitin-protein ligase that plays a role in the regulation of inflammatory response. Mechanistically, mediates the 'Lys-48'-linked polyubiquitination of TAB2, a regulatory protein of the kinase TAK1, leading to its degradation via the proteasomal pathway and inhibition of the TLR-mediated inflammatory immune response. May act as a transcriptional repressor in mitogen-activated protein kinase signaling pathway. The sequence is that of E3 ubiquitin-protein ligase TRIM45 (Trim45) from Mus musculus (Mouse).